A 232-amino-acid chain; its full sequence is MEESLLSIIVALDAKSQYDALKIVEQLDPTLCRVKVGKELFTHEGPSVVKKLQEENFEVFLDLKFHDIPNTTAQAVCAAADLGVWMVNVHASGGRKMMETCVERLKAGNYQTQLIAVTVLTSMGREDLKDIGLDIEPVEQVKRLAKLTKESGLDGVVCSAQEAKILRELIGQDFSLVTPGIRPEGSNADDQKRIVTPKQAMLDGSTHLVIGRPITNAENPTEMLKSILASIA.

Residues Asp13, Lys35, 62–71 (DLKFHDIPNT), Thr121, Arg182, Gln191, Gly211, and Arg212 contribute to the substrate site. The active-site Proton donor is Lys64.

It belongs to the OMP decarboxylase family. Type 1 subfamily. As to quaternary structure, homodimer.

It carries out the reaction orotidine 5'-phosphate + H(+) = UMP + CO2. The protein operates within pyrimidine metabolism; UMP biosynthesis via de novo pathway; UMP from orotate: step 2/2. In terms of biological role, catalyzes the decarboxylation of orotidine 5'-monophosphate (OMP) to uridine 5'-monophosphate (UMP). The chain is Orotidine 5'-phosphate decarboxylase from Acinetobacter baumannii (strain AB0057).